A 341-amino-acid chain; its full sequence is Phosphoribosylformylglycinamidine cyclo-ligase (341 aa).

It belongs to the AIR synthase family.

It localises to the cytoplasm. The enzyme catalyses 2-formamido-N(1)-(5-O-phospho-beta-D-ribosyl)acetamidine + ATP = 5-amino-1-(5-phospho-beta-D-ribosyl)imidazole + ADP + phosphate + H(+). Its pathway is purine metabolism; IMP biosynthesis via de novo pathway; 5-amino-1-(5-phospho-D-ribosyl)imidazole from N(2)-formyl-N(1)-(5-phospho-D-ribosyl)glycinamide: step 2/2. In Synechococcus elongatus (strain ATCC 33912 / PCC 7942 / FACHB-805) (Anacystis nidulans R2), this protein is Phosphoribosylformylglycinamidine cyclo-ligase.